A 137-amino-acid polypeptide reads, in one-letter code: Large ribosomal subunit protein uL16 (137 aa).

This sequence belongs to the universal ribosomal protein uL16 family. As to quaternary structure, part of the 50S ribosomal subunit.

Its function is as follows. Binds 23S rRNA and is also seen to make contacts with the A and possibly P site tRNAs. The chain is Large ribosomal subunit protein uL16 from Rhizobium rhizogenes (strain K84 / ATCC BAA-868) (Agrobacterium radiobacter).